A 756-amino-acid chain; its full sequence is Protein SDA1 homolog (756 aa).

Residues 227-282 (EEEEDEAVKEKRAKDNFRKKSLAHRVGKKTKGRITRLAKSKVDLKKAKQEEDNKLQ) are a coiled coil. Composition is skewed to acidic residues over residues 494–514 (AGEE…EGWE) and 521–596 (ADDD…EEEE). Disordered regions lie at residues 494–615 (AGEE…VLRT) and 638–756 (AREN…RGRH). Positions 605–615 (QQKEKVEVLRT) are enriched in basic and acidic residues. Acidic residues predominate over residues 647 to 656 (DMDQDDDENG). The span at 677-691 (EEKLERIARAKEGRD) shows a compositional bias: basic and acidic residues. Residues 725–735 (KTKKVRGKSLK) show a composition bias toward basic residues. Basic and acidic residues predominate over residues 736–749 (SFRDKQIGQREHSA).

Belongs to the SDA1 family.

The protein resides in the nucleus. It is found in the nucleolus. Required for 60S pre-ribosomal subunits export to the cytoplasm. This chain is Protein SDA1 homolog (sdad1), found in Dictyostelium discoideum (Social amoeba).